The primary structure comprises 614 residues: MIQVLLVTICLAVFPYQGSSIILESGNVNDYEVMYPQKVAALPKGAVQQKYEDTMQYEFKVNGEPVVLHLEKNKGLFSEDYSETHYSPDGREITTNPPVEDHCYYHGRIQNDADSTASISACNGLKGHFKLQGEMYLIEPLKFSDSEAHAVYKYENVEKEEEAPKMCGVTQTNWESDEPIKKASKLVVTAEQQRFPRRYIKLAIVVDHGIVTKHHGNLKKIRKWIYQLVNTINNIYRSLNILVALVYLEIWSKQNKITVQSASNVTLDLFGDWRESVLLKQRSHDCAQLLTTIDFDGPTIGKAYTASMCDPKRSVGIVQDYSPINLVVAVIMTHEMGHNLGIPHDGNSCTCGGFPCIMSPMISDPPSELFSNCSKAYYQTFLTDHKPQCILNAPSKTDIVSPPVCGNELLEAGEECDCGSPENCQYQCCDAASCKLHSWVKCESGECCDQCRFRTAGTECRAAESECDIPESCTGQSADCPTDRFHRNGQPCLYNHGYCYNGKCPIMFYQCYFLFGSNATVAEDDCFNNNKKGDKYFYCRKENEKYIPCAQEDVKCGRLFCDNKKYPCHYNYSEDLDFGMVDHGTKCADGKVCSNRQCVDVNEAYKSTTVFSLI.

A signal peptide spans 1–20; the sequence is MIQVLLVTICLAVFPYQGSS. Positions 21–191 are excised as a propeptide; the sequence is IILESGNVND…KASKLVVTAE (171 aa). Q192 is subject to Pyrrolidone carboxylic acid. The Peptidase M12B domain occupies 198 to 394; that stretch reads RYIKLAIVVD…HKPQCILNAP (197 aa). N264 carries N-linked (GlcNAc...) asparagine glycosylation. Cystine bridges form between C309/C389, C349/C373, and C351/C356. A Zn(2+)-binding site is contributed by H334. E335 is an active-site residue. Residues H338 and H344 each contribute to the Zn(2+) site. Residue N372 is glycosylated (N-linked (GlcNAc...) asparagine). Residues 395-398 constitute a propeptide that is removed on maturation; the sequence is SKTD. The Disintegrin domain occupies 402–488; sequence PPVCGNELLE…DCPTDRFHRN (87 aa). Residues V404, N407, L409, E411, E414, and D417 each coordinate Ca(2+). Intrachain disulfides connect C405–C424, C405–C434, C416–C429, C416–C434, C418–C424, C428–C451, C442–C448, C447–C473, C460–C480, C467–C492, C467–C499, C492–C504, C499–C504, C511–C526, C511–C561, C526–C568, C539–C549, C549–C556, C556–C593, C561–C568, C587–C598, and C593–C598. A D/ECD-tripeptide motif is present at residues 466–468; sequence ECD. N-linked (GlcNAc...) asparagine glycosylation is present at N518. The N-linked (GlcNAc...) asparagine glycan is linked to N571. The propeptide occupies 608–614; it reads TTVFSLI.

The protein belongs to the venom metalloproteinase (M12B) family. P-III subfamily. P-IIIb sub-subfamily. As to quaternary structure, monomer. Zn(2+) serves as cofactor. In terms of tissue distribution, expressed by the venom gland.

The protein resides in the secreted. Its function is as follows. Zinc protease that induces hemorrhage. Has preference for Tyr, Leu, Arg, Met, and Phe at the P1 position, in descending order (in vitro). Shows equal preference for the sequences of Ala-Asp and Arg-Ile at the P3-P2 position with different enzyme cleavage sites across the P1 position: the N-terminus side for Ala-Asp and the C-terminus side for Arg-Ile. In terms of biological role, inhibits platelet aggregation induced by ADP, thrombin, platelet-activating factor and collagen. Acts by inhibiting fibrinogen interaction with platelet receptors alpha-IIb/beta-3 (ITGA2B/ITGB3). This Protobothrops flavoviridis (Habu) protein is Zinc metalloproteinase-disintegrin-like HR1b.